A 422-amino-acid polypeptide reads, in one-letter code: Tryptophan synthase beta chain (422 aa).

The residue at position 87 (lysine 87) is an N6-(pyridoxal phosphate)lysine.

It belongs to the TrpB family. In terms of assembly, tetramer of two alpha and two beta chains. Pyridoxal 5'-phosphate is required as a cofactor.

It catalyses the reaction (1S,2R)-1-C-(indol-3-yl)glycerol 3-phosphate + L-serine = D-glyceraldehyde 3-phosphate + L-tryptophan + H2O. Its pathway is amino-acid biosynthesis; L-tryptophan biosynthesis; L-tryptophan from chorismate: step 5/5. In terms of biological role, the beta subunit is responsible for the synthesis of L-tryptophan from indole and L-serine. The protein is Tryptophan synthase beta chain (trpB) of Haloferax volcanii (strain ATCC 29605 / DSM 3757 / JCM 8879 / NBRC 14742 / NCIMB 2012 / VKM B-1768 / DS2) (Halobacterium volcanii).